A 323-amino-acid chain; its full sequence is tRNA dimethylallyltransferase (323 aa).

Position 12 to 19 (12 to 19 (GPTAAGKT)) interacts with ATP. 14–19 (TAAGKT) contributes to the substrate binding site. 2 interaction with substrate tRNA regions span residues 37 to 40 (DSAL) and 161 to 165 (QRLIR).

This sequence belongs to the IPP transferase family. In terms of assembly, monomer. The cofactor is Mg(2+).

The catalysed reaction is adenosine(37) in tRNA + dimethylallyl diphosphate = N(6)-dimethylallyladenosine(37) in tRNA + diphosphate. Its function is as follows. Catalyzes the transfer of a dimethylallyl group onto the adenine at position 37 in tRNAs that read codons beginning with uridine, leading to the formation of N6-(dimethylallyl)adenosine (i(6)A). This Pseudomonas syringae pv. tomato (strain ATCC BAA-871 / DC3000) protein is tRNA dimethylallyltransferase.